The chain runs to 267 residues: tRNA pseudouridine synthase A (267 aa).

D51 (nucleophile) is an active-site residue. Y109 provides a ligand contact to substrate.

This sequence belongs to the tRNA pseudouridine synthase TruA family. As to quaternary structure, homodimer.

It catalyses the reaction uridine(38/39/40) in tRNA = pseudouridine(38/39/40) in tRNA. Functionally, formation of pseudouridine at positions 38, 39 and 40 in the anticodon stem and loop of transfer RNAs. This chain is tRNA pseudouridine synthase A, found in Staphylococcus aureus (strain MSSA476).